The chain runs to 431 residues: Eukaryotic translation initiation factor 5 (431 aa).

The residue at position 10 (serine 10) is a Phosphoserine. GTP is bound at residue 27 to 34 (GKGNGIKT). A disordered region spans residues 143–216 (KNPPENSDSG…TTEEAQRRRM (74 aa)). The segment covering 153–170 (TGKKEKEKKNRKGKDKEN) has biased composition (basic and acidic residues). Residues 178–193 (TPPPPPPPNEISPPPH) are compositionally biased toward pro residues. The span at 196–209 (EEEEDDDWGEDTTE) shows a compositional bias: acidic residues. At threonine 227 the chain carries Phosphothreonine. Serine 229, serine 389, serine 390, and serine 410 each carry phosphoserine. The W2 domain maps to 233–392 (ERTIEERVNI…KEAEEESSGG (160 aa)). Residues lysine 413 and lysine 418 each participate in a glycyl lysine isopeptide (Lys-Gly) (interchain with G-Cter in SUMO2) cross-link. Serine 419 is subject to Phosphoserine.

This sequence belongs to the eIF-2-beta/eIF-5 family. In terms of assembly, component of the 43S pre-initiation complex (43S PIC), which is composed of the 40S ribosomal subunit, EIF1, eIF1A (EIF1AX), eIF3 complex, EIF5 and eIF2-GTP-initiator tRNA complex (eIF2 ternary complex). Interacts with eIF1A (EIF1AX) during scanning. Interacts through its C-terminal domain (CTD) with EIF1 or with eIF2-beta (EIF2S2) (mutually exclusive) through a common binding site. Interacts through its C-terminal domain (CTD) with the CTD of EIF5B. Interacts with FMR1 isoform 6; this interaction occurs in a RNA-dependent manner.

It is found in the cytoplasm. In terms of biological role, component of the 43S pre-initiation complex (43S PIC), which binds to the mRNA cap-proximal region, scans mRNA 5'-untranslated region, and locates the initiation codon. In this complex, acts as a GTPase-activating protein, by promoting GTP hydrolysis by eIF2G (EIF2S3). During scanning, interacts with both EIF1 (via its C-terminal domain (CTD)) and EIF1A (via its NTD). This interaction with EIF1A contributes to the maintenance of EIF1 within the open 43S PIC. When start codon is recognized, EIF5, via its NTD, induces eIF2G (EIF2S3) to hydrolyze the GTP. Start codon recognition also induces a conformational change of the PIC to a closed state. This change increases the affinity of EIF5-CTD for EIF2-beta (EIF2S2), which allows the release, by an indirect mechanism, of EIF1 from the PIC. Finally, EIF5 stabilizes the PIC in its closed conformation. This chain is Eukaryotic translation initiation factor 5 (EIF5), found in Pongo abelii (Sumatran orangutan).